Reading from the N-terminus, the 77-residue chain is Translation initiation factor IF-1, chloroplastic (77 aa).

The 71-residue stretch at 1-71 folds into the S1-like domain; it reads MKEQKWIHEG…TRGRIIYRLR (71 aa).

This sequence belongs to the IF-1 family. As to quaternary structure, component of the 30S ribosomal translation pre-initiation complex which assembles on the 30S ribosome in the order IF-2 and IF-3, IF-1 and N-formylmethionyl-tRNA(fMet); mRNA recruitment can occur at any time during PIC assembly.

It localises to the plastid. It is found in the chloroplast. Functionally, one of the essential components for the initiation of protein synthesis. Stabilizes the binding of IF-2 and IF-3 on the 30S subunit to which N-formylmethionyl-tRNA(fMet) subsequently binds. Helps modulate mRNA selection, yielding the 30S pre-initiation complex (PIC). Upon addition of the 50S ribosomal subunit IF-1, IF-2 and IF-3 are released leaving the mature 70S translation initiation complex. The sequence is that of Translation initiation factor IF-1, chloroplastic from Daucus carota (Wild carrot).